A 265-amino-acid polypeptide reads, in one-letter code: Flagellar brake protein YcgR (265 aa).

A PilZ domain is found at 135–252 (QRRESYRLET…DETIQRYIFR (118 aa)).

The protein belongs to the YcgR family. In terms of assembly, monomer. Interacts with the flagellar basal bodies.

Its subcellular location is the bacterial flagellum basal body. Its function is as follows. Acts as a flagellar brake, regulating swimming and swarming in a bis-(3'-5') cyclic diguanylic acid (c-di-GMP)-dependent manner. Binds 1 c-di-GMP dimer per subunit. Increasing levels of c-di-GMP lead to decreased motility. The protein is Flagellar brake protein YcgR of Xanthomonas campestris pv. campestris (strain B100).